The sequence spans 412 residues: Trafficking protein particle complex subunit 13 (412 aa).

Belongs to the TRAPPC13 family. Part of the multisubunit TRAPP (transport protein particle) complex.

The polypeptide is Trafficking protein particle complex subunit 13 (trappc13) (Danio rerio (Zebrafish)).